The primary structure comprises 235 residues: Ubiquinone biosynthesis O-methyltransferase (235 aa).

S-adenosyl-L-methionine-binding residues include Arg-39, Gly-59, Asp-80, and Met-124.

This sequence belongs to the methyltransferase superfamily. UbiG/COQ3 family.

The catalysed reaction is a 3-demethylubiquinol + S-adenosyl-L-methionine = a ubiquinol + S-adenosyl-L-homocysteine + H(+). It catalyses the reaction a 3-(all-trans-polyprenyl)benzene-1,2-diol + S-adenosyl-L-methionine = a 2-methoxy-6-(all-trans-polyprenyl)phenol + S-adenosyl-L-homocysteine + H(+). It participates in cofactor biosynthesis; ubiquinone biosynthesis. Functionally, O-methyltransferase that catalyzes the 2 O-methylation steps in the ubiquinone biosynthetic pathway. In Vibrio vulnificus (strain CMCP6), this protein is Ubiquinone biosynthesis O-methyltransferase.